The primary structure comprises 251 residues: Sugar fermentation stimulation protein homolog (251 aa).

It belongs to the SfsA family.

The polypeptide is Sugar fermentation stimulation protein homolog (Prochlorococcus marinus (strain MIT 9313)).